The following is a 1915-amino-acid chain: Protein TIC 214 (1915 aa).

6 consecutive transmembrane segments (helical) span residues 18–38 (IINS…FSIG), 64–84 (FITG…HLAL), 90–110 (ITVL…HKYF), 126–146 (LNIQ…HFIL), 174–194 (VGWL…LIWI), and 230–250 (IFSI…PSTL). Disordered stretches follow at residues 260–319 (KMKQ…EIRV) and 1566–1631 (NKNI…GSVL). Residues 267–277 (SEEETDVEIET) show a composition bias toward acidic residues. The segment covering 279–288 (SETKETKEEQ) has biased composition (basic and acidic residues). Over residues 304-315 (EKEDPDKIDETE) the composition is skewed to acidic residues. The span at 1587–1601 (KSLELENRNQEEKES) shows a compositional bias: basic and acidic residues. The segment covering 1602–1631 (SSQGDLGSNAQNQGNLGPNAQNQGNLGSVL) has biased composition (polar residues).

This sequence belongs to the TIC214 family. In terms of assembly, part of the Tic complex.

The protein resides in the plastid. Its subcellular location is the chloroplast inner membrane. In terms of biological role, involved in protein precursor import into chloroplasts. May be part of an intermediate translocation complex acting as a protein-conducting channel at the inner envelope. This Platanus occidentalis (Sycamore) protein is Protein TIC 214.